Consider the following 465-residue polypeptide: ATP synthase subunit beta (465 aa).

Residue 148-155 coordinates ATP; that stretch reads GGAGVGKT.

The protein belongs to the ATPase alpha/beta chains family. As to quaternary structure, F-type ATPases have 2 components, CF(1) - the catalytic core - and CF(0) - the membrane proton channel. CF(1) has five subunits: alpha(3), beta(3), gamma(1), delta(1), epsilon(1). CF(0) has three main subunits: a(1), b(2) and c(9-12). The alpha and beta chains form an alternating ring which encloses part of the gamma chain. CF(1) is attached to CF(0) by a central stalk formed by the gamma and epsilon chains, while a peripheral stalk is formed by the delta and b chains.

The protein localises to the cell inner membrane. It carries out the reaction ATP + H2O + 4 H(+)(in) = ADP + phosphate + 5 H(+)(out). In terms of biological role, produces ATP from ADP in the presence of a proton gradient across the membrane. The catalytic sites are hosted primarily by the beta subunits. The protein is ATP synthase subunit beta of Chromobacterium violaceum (strain ATCC 12472 / DSM 30191 / JCM 1249 / CCUG 213 / NBRC 12614 / NCIMB 9131 / NCTC 9757 / MK).